The chain runs to 865 residues: Protein translocase subunit SecA (865 aa).

ATP contacts are provided by residues Q93, 111–115, and D501; that span reads GEGKT. Residues C841, C843, C852, and C853 each coordinate Zn(2+).

The protein belongs to the SecA family. As to quaternary structure, monomer and homodimer. Part of the essential Sec protein translocation apparatus which comprises SecA, SecYEG and auxiliary proteins SecDF-YajC and YidC. Zn(2+) serves as cofactor.

Its subcellular location is the cell inner membrane. It is found in the cytoplasm. It catalyses the reaction ATP + H2O + cellular proteinSide 1 = ADP + phosphate + cellular proteinSide 2.. Part of the Sec protein translocase complex. Interacts with the SecYEG preprotein conducting channel. Has a central role in coupling the hydrolysis of ATP to the transfer of proteins into and across the cell membrane, serving as an ATP-driven molecular motor driving the stepwise translocation of polypeptide chains across the membrane. The sequence is that of Protein translocase subunit SecA from Helicobacter pylori (strain P12).